A 170-amino-acid polypeptide reads, in one-letter code: Protein SprT (170 aa).

Positions 23–165 (QLANQHLGTD…RECGEKLQFV (143 aa)) constitute a SprT-like domain. Zn(2+) is bound at residue His78. The active site involves Glu79. Residue His82 participates in Zn(2+) binding.

Belongs to the SprT family. Zn(2+) is required as a cofactor.

Its subcellular location is the cytoplasm. This chain is Protein SprT, found in Yersinia enterocolitica serotype O:8 / biotype 1B (strain NCTC 13174 / 8081).